The sequence spans 85 residues: Small ribosomal subunit protein uS17 (85 aa).

The protein belongs to the universal ribosomal protein uS17 family. Part of the 30S ribosomal subunit.

Its function is as follows. One of the primary rRNA binding proteins, it binds specifically to the 5'-end of 16S ribosomal RNA. In Geobacter sulfurreducens (strain ATCC 51573 / DSM 12127 / PCA), this protein is Small ribosomal subunit protein uS17.